A 161-amino-acid polypeptide reads, in one-letter code: uncharacterized protein (161 aa).

The helical transmembrane segment at 30–50 (GVILFRLLGVILFRLLGVILF) threads the bilayer.

The protein localises to the membrane. This is an uncharacterized protein from Homo sapiens (Human).